Here is a 345-residue protein sequence, read N- to C-terminus: MNIAIIGATGYGGVELLRFLQHHPHVHHCSLYSSSQDGIHFSESFPHVGEIEGAILQKIDVEQMADECEVVFFATPPGVSSTLAPTLIDKGVKVIDLSGDFRLKDRSVYEMWYKRQTASDHYLQQAVYGLTEWNKEDIQKAQLLSNPGCYPTAALLGLAPLVKERLIEEDSIIVDAKSGVSGAGRKASLNTHFSEVNENVKIYKVNSHQHIPEIEQMLKAWNERIQPITFSTHLIPMTRGIMATIYAKAKKELSLETLLDLYKTSYEDSKFVRVRKPGQFPATKEVYGSNYCDIGVAYDERTGRVTVVSVIDNLVKGAAGQAIQNLNVMMGWDEESGLMLAPIYP.

Cys149 is an active-site residue.

It belongs to the NAGSA dehydrogenase family. Type 1 subfamily.

It localises to the cytoplasm. The enzyme catalyses N-acetyl-L-glutamate 5-semialdehyde + phosphate + NADP(+) = N-acetyl-L-glutamyl 5-phosphate + NADPH + H(+). It participates in amino-acid biosynthesis; L-arginine biosynthesis; N(2)-acetyl-L-ornithine from L-glutamate: step 3/4. Its function is as follows. Catalyzes the NADPH-dependent reduction of N-acetyl-5-glutamyl phosphate to yield N-acetyl-L-glutamate 5-semialdehyde. This Geobacillus sp. (strain WCH70) protein is N-acetyl-gamma-glutamyl-phosphate reductase.